We begin with the raw amino-acid sequence, 1609 residues long: Factor-induced gene 2 protein (1609 aa).

The N-terminal stretch at 1–22 (MNSFASLGLIYSVVNLLTRVEA) is a signal peptide. N-linked (GlcNAc...) asparagine glycosylation occurs at Asn29. Disordered regions lie at residues 129 to 165 (SSTL…SSTS), 196 to 243 (SSEI…EPLS), and 266 to 312 (TIPT…NYDV). The segment covering 137-148 (QPHRTSHSSSSF) has biased composition (polar residues). Residues 150–165 (LPVTAPSSSSLPSSTS) are compositionally biased toward low complexity. The span at 196–212 (SSEISGSTSPKSLESFD) shows a compositional bias: polar residues. Composition is skewed to low complexity over residues 213–243 (TTGT…EPLS) and 274–285 (TSSLPPTLRSSS). Asn231 carries an N-linked (GlcNAc...) asparagine glycan. Polar residues predominate over residues 286–312 (MAPTSGSDSISHNFTSPPSKTSGNYDV). N-linked (GlcNAc...) asparagine glycans are attached at residues Asn298, Asn347, Asn386, Asn426, Asn495, Asn535, Asn661, Asn674, and Asn713. Residues 846-876 (ATSEATSTSTQVSATSATATASESSTTSQVS) are disordered. N-linked (GlcNAc...) asparagine glycans are attached at residues Asn889, Asn907, and Asn1079. The span at 1231–1243 (CTQDVPTQSSSPA) shows a compositional bias: polar residues. The interval 1231–1259 (CTQDVPTQSSSPASTLAYSPSVSTSSSSS) is disordered. Low complexity predominate over residues 1244–1259 (STLAYSPSVSTSSSSS). An N-linked (GlcNAc...) asparagine glycan is attached at Asn1400. Gly1588 is lipidated: GPI-anchor amidated glycine. A propeptide spans 1589–1609 (SASKFLCSKFFMIMVMVINFI) (removed in mature form).

In terms of processing, N-glycosylated.

It localises to the secreted. It is found in the cell wall. Its subcellular location is the membrane. Functionally, required for efficient mating. Plays a role in maintenance of cell wall integrity during mating. Important for mating cell projection shape and conjugation bridge diameter. Plays a role in cell fusion and nuclear migration. This is Factor-induced gene 2 protein (FIG2) from Saccharomyces cerevisiae (strain ATCC 204508 / S288c) (Baker's yeast).